Consider the following 120-residue polypeptide: Small ribosomal subunit protein uS12c (120 aa).

This sequence belongs to the universal ribosomal protein uS12 family. In terms of assembly, part of the 30S ribosomal subunit.

It localises to the plastid. The protein resides in the apicoplast. Functionally, with S4 and S5 plays an important role in translational accuracy. Located at the interface of the 30S and 50S subunits. This chain is Small ribosomal subunit protein uS12c (rps12), found in Eimeria tenella (Coccidian parasite).